Here is a 172-residue protein sequence, read N- to C-terminus: uncharacterized protein (172 aa).

Positions 1-148 (MANSQKVIDV…TIHDFFENGN (148 aa)) constitute a Ferritin-like diiron domain.

This is an uncharacterized protein from Ureaplasma urealyticum (Ureaplasma urealyticum biotype 2).